Here is a 182-residue protein sequence, read N- to C-terminus: Translation initiation factor IF-3 (182 aa).

It belongs to the IF-3 family. As to quaternary structure, monomer.

It is found in the cytoplasm. IF-3 binds to the 30S ribosomal subunit and shifts the equilibrium between 70S ribosomes and their 50S and 30S subunits in favor of the free subunits, thus enhancing the availability of 30S subunits on which protein synthesis initiation begins. The sequence is that of Translation initiation factor IF-3 from Endomicrobium trichonymphae.